Here is a 113-residue protein sequence, read N- to C-terminus: Ig kappa chain V-II region 17S29.1 (113 aa).

The interval 1–23 (DIVMTQAVFSNPVTLGTSASISC) is framework-1. Residues C23 and C93 are joined by a disulfide bond. Residues 24-39 (RSSKSLLHSNGITYLY) are complementarity-determining-1. The segment at 40 to 54 (WYLQKPGQSPQLLLY) is framework-2. The complementarity-determining-2 stretch occupies residues 55–61 (QMSNLAS). A framework-3 region spans residues 62–93 (GVPDRFSSSGSGTDFTLRISRVEAEDVGVYYC). A complementarity-determining-3 region spans residues 94-102 (AHNLELPYT). A framework-4 region spans residues 103-112 (FGGGTKLEIK).

Its function is as follows. Anti-streptococcal group A carbohydrate antibody. This is Ig kappa chain V-II region 17S29.1 from Mus musculus (Mouse).